The sequence spans 745 residues: Junction plakoglobin (745 aa).

M1 carries the post-translational modification N-acetylmethionine. An O-linked (GlcNAc) threonine glycan is attached at T14. Phosphoserine is present on residues S99 and S125. ARM repeat units lie at residues 132 to 171, 172 to 215, 216 to 255, 258 to 297, 298 to 341, 342 to 381, 383 to 420, 423 to 464, 470 to 510, 512 to 551, 574 to 613, and 615 to 661; these read NYQD…QLSK, KEAS…LSHH, REGL…NLLL, EGAK…LLAY, GNQE…LSVC, PSNK…NLSD, ATKQ…NLTC, SKNK…HLTS, EMAQ…NLAL, PANH…QPYT, PMNR…ELAQ, and KEAA…PDYR. Residues 132–297 form an interaction with DSC1 and DSG1 region; sequence NYQDDAELAT…TTDCLQLLAY (166 aa). Position 182 is a phosphoserine (S182). Residues 574–661 are interaction with DSC1; that stretch reads PMNRMEIFRL…ISEDKNPDYR (88 aa). A phosphoserine mark is found at S665 and S730.

This sequence belongs to the beta-catenin family. Homodimer. Component of an E-cadherin/catenin adhesion complex composed of at least E-cadherin/CDH1 and gamma-catenin/JUP, and possibly alpha-catenin/CTNNA1; the complex is located to adherens junctions. The stable association of CTNNA1 is controversial as CTNNA1 was shown not to bind to F-actin when assembled in the complex. Interacts with MUC1. Interacts with CAV1. Interacts with PTPRJ. Interacts with DSG1. Interacts with DSC1 and DSC2. Interacts with PKP2. Interacts with PKP3 (via N-terminus); the interaction is required for PKP3 localization to desmosome cell-cell junctions. Interacts with DSG4. Post-translationally, may be phosphorylated by FER.

The protein resides in the cell junction. Its subcellular location is the adherens junction. It is found in the desmosome. The protein localises to the cytoplasm. It localises to the cytoskeleton. The protein resides in the cell membrane. Its subcellular location is the nucleus. Functionally, common junctional plaque protein. The membrane-associated plaques are architectural elements in an important strategic position to influence the arrangement and function of both the cytoskeleton and the cells within the tissue. The presence of plakoglobin in both the desmosomes and in the intermediate junctions suggests that it plays a central role in the structure and function of submembranous plaques. Acts as a substrate for VE-PTP and is required by it to stimulate VE-cadherin function in endothelial cells. Can replace beta-catenin in E-cadherin/catenin adhesion complexes which are proposed to couple cadherins to the actin cytoskeleton. This is Junction plakoglobin from Bos taurus (Bovine).